Reading from the N-terminus, the 511-residue chain is GMP synthase [glutamine-hydrolyzing] (511 aa).

The 191-residue stretch at 5–195 folds into the Glutamine amidotransferase type-1 domain; the sequence is DILVLDFGSQ…AKYACNCESV (191 aa). C82 acts as the Nucleophile in catalysis. Catalysis depends on residues H169 and E171. The region spanning 196–386 is the GMPS ATP-PPase domain; sequence WNMGSFAKTQ…LGLSKEVVYR (191 aa). Residue 223-229 participates in ATP binding; sequence SGGVDSS.

Homodimer.

The catalysed reaction is XMP + L-glutamine + ATP + H2O = GMP + L-glutamate + AMP + diphosphate + 2 H(+). It participates in purine metabolism; GMP biosynthesis; GMP from XMP (L-Gln route): step 1/1. In terms of biological role, catalyzes the synthesis of GMP from XMP. The chain is GMP synthase [glutamine-hydrolyzing] from Campylobacter jejuni subsp. jejuni serotype O:23/36 (strain 81-176).